Here is a 545-residue protein sequence, read N- to C-terminus: Probable protein kinase UbiB (545 aa).

The Protein kinase domain occupies 124-502 (DFDETPLASA…RRSQGLARFY (379 aa)). ATP is bound by residues 130–138 (LASASIAQV) and K153. D288 functions as the Proton acceptor in the catalytic mechanism. The next 2 helical transmembrane spans lie at 498–517 (LARF…AILF) and 521–540 (VETI…LLGW).

It belongs to the ABC1 family. UbiB subfamily.

The protein localises to the cell inner membrane. It participates in cofactor biosynthesis; ubiquinone biosynthesis [regulation]. Its function is as follows. Is probably a protein kinase regulator of UbiI activity which is involved in aerobic coenzyme Q (ubiquinone) biosynthesis. This chain is Probable protein kinase UbiB, found in Photobacterium profundum (strain SS9).